The sequence spans 417 residues: Serine hydroxymethyltransferase (417 aa).

(6S)-5,6,7,8-tetrahydrofolate-binding positions include Leu-121 and 125–127 (GHL). Lys-229 is modified (N6-(pyridoxal phosphate)lysine). 355-357 (SPF) contacts (6S)-5,6,7,8-tetrahydrofolate.

The protein belongs to the SHMT family. In terms of assembly, homodimer. The cofactor is pyridoxal 5'-phosphate.

The protein localises to the cytoplasm. The catalysed reaction is (6R)-5,10-methylene-5,6,7,8-tetrahydrofolate + glycine + H2O = (6S)-5,6,7,8-tetrahydrofolate + L-serine. Its pathway is one-carbon metabolism; tetrahydrofolate interconversion. It functions in the pathway amino-acid biosynthesis; glycine biosynthesis; glycine from L-serine: step 1/1. Functionally, catalyzes the reversible interconversion of serine and glycine with tetrahydrofolate (THF) serving as the one-carbon carrier. This reaction serves as the major source of one-carbon groups required for the biosynthesis of purines, thymidylate, methionine, and other important biomolecules. Also exhibits THF-independent aldolase activity toward beta-hydroxyamino acids, producing glycine and aldehydes, via a retro-aldol mechanism. The protein is Serine hydroxymethyltransferase of Klebsiella pneumoniae (strain 342).